Consider the following 214-residue polypeptide: UBX domain-containing protein 10 (214 aa).

Residues 1–13 (MHVTRPKSSKGRS) show a composition bias toward basic residues. Positions 1–79 (MHVTRPKSSK…AYDRPPEEPV (79 aa)) are disordered. A compositionally biased stretch (polar residues) spans 16–25 (MITNSSMIYT). Residues 49 to 60 (SLRSRAILRRSS) show a composition bias toward low complexity. One can recognise a UBX domain in the interval 127–204 (PEESDLLLAI…GVLNKSVLCI (78 aa)).

This sequence belongs to the UBXN10 family.

Its subcellular location is the cell projection. It localises to the cilium. In terms of biological role, required for ciliogenesis. Acts as a tethering factor that facilitates recruitment of vcp/p97 to the intraflagellar transport complex B (IFT-B) in cilia. The chain is UBX domain-containing protein 10 from Danio rerio (Zebrafish).